The following is a 163-amino-acid chain: Putative pre-16S rRNA nuclease (163 aa).

The protein belongs to the YqgF nuclease family.

It localises to the cytoplasm. Its function is as follows. Could be a nuclease involved in processing of the 5'-end of pre-16S rRNA. This Chlamydia caviae (strain ATCC VR-813 / DSM 19441 / 03DC25 / GPIC) (Chlamydophila caviae) protein is Putative pre-16S rRNA nuclease.